We begin with the raw amino-acid sequence, 542 residues long: Sialate O-acetylesterase (542 aa).

Positions 1–23 (MVSPRPVGLMLLLIIARVSRGAG) are cleaved as a signal peptide. N-linked (GlcNAc...) asparagine glycans are attached at residues Asn-107, Asn-138, Asn-188, Asn-294, Asn-357, Asn-428, Asn-449, and Asn-463.

In terms of assembly, disulfide-linked heterodimer of a small subunit and a large subunit. The two subunits are derived from a single precursor by proteolytic cleavage. In terms of processing, glycosylated. In terms of tissue distribution, widely expressed.

It is found in the lysosome. The catalysed reaction is N-acetyl-9-O-acetylneuraminate + H2O = N-acetylneuraminate + acetate + H(+). It carries out the reaction an Ac-O-9-sialoglycoconjugate + H2O = a sialoglycoconjugate + acetate + H(+). With respect to regulation, inhibited by diisopropyl fluorophosphate and diethyl-P-nitrophenyl phosphate. Functionally, catalyzes the removal of O-acetyl ester groups from position 9 of the free diacetylated sialate N-acetyl-9-O-acetylneuraminate (Neu5,9Ac2) in the cytosol and of the diacetylated sialate residues of sialylglycoconjugates in the lysosomes. Together with the sialate-O-acetyltransferase they regulate the balance of acetylated sialoglycoconjugates, key players in various processes such as cell-cell interactions, host-pathogen recognition, and tumor antigenicity. The sequence is that of Sialate O-acetylesterase (Siae) from Rattus norvegicus (Rat).